The sequence spans 334 residues: Glycerol-3-phosphate dehydrogenase [NAD(P)+] (334 aa).

Tryptophan 13, arginine 33, and lysine 106 together coordinate NADPH. Residues lysine 106, glycine 137, and serine 139 each contribute to the sn-glycerol 3-phosphate site. Residue alanine 141 coordinates NADPH. Residues lysine 192, aspartate 245, serine 255, arginine 256, and asparagine 257 each contribute to the sn-glycerol 3-phosphate site. Lysine 192 (proton acceptor) is an active-site residue. Residue arginine 256 participates in NADPH binding. Residues valine 280 and glutamate 282 each coordinate NADPH.

The protein belongs to the NAD-dependent glycerol-3-phosphate dehydrogenase family.

It is found in the cytoplasm. The enzyme catalyses sn-glycerol 3-phosphate + NAD(+) = dihydroxyacetone phosphate + NADH + H(+). It carries out the reaction sn-glycerol 3-phosphate + NADP(+) = dihydroxyacetone phosphate + NADPH + H(+). Its pathway is membrane lipid metabolism; glycerophospholipid metabolism. Functionally, catalyzes the reduction of the glycolytic intermediate dihydroxyacetone phosphate (DHAP) to sn-glycerol 3-phosphate (G3P), the key precursor for phospholipid synthesis. The sequence is that of Glycerol-3-phosphate dehydrogenase [NAD(P)+] from Chlamydia trachomatis serovar L2b (strain UCH-1/proctitis).